We begin with the raw amino-acid sequence, 294 residues long: 3-methyl-2-oxobutanoate hydroxymethyltransferase (294 aa).

Residues 1-12 (MSASAESTNATP) are compositionally biased toward polar residues. The disordered stretch occupies residues 1–21 (MSASAESTNATPYGTLPPTAA). Positions 69 and 112 each coordinate Mg(2+). 3-methyl-2-oxobutanoate contacts are provided by residues 69–70 (DS), Asp-112, and Lys-141. Glu-143 is a Mg(2+) binding site. Residue Glu-210 is the Proton acceptor of the active site.

It belongs to the PanB family. In terms of assembly, homodecamer; pentamer of dimers. The cofactor is Mg(2+).

The protein localises to the cytoplasm. It catalyses the reaction 3-methyl-2-oxobutanoate + (6R)-5,10-methylene-5,6,7,8-tetrahydrofolate + H2O = 2-dehydropantoate + (6S)-5,6,7,8-tetrahydrofolate. The protein operates within cofactor biosynthesis; (R)-pantothenate biosynthesis; (R)-pantoate from 3-methyl-2-oxobutanoate: step 1/2. Functionally, catalyzes the reversible reaction in which hydroxymethyl group from 5,10-methylenetetrahydrofolate is transferred onto alpha-ketoisovalerate to form ketopantoate. In Albidiferax ferrireducens (strain ATCC BAA-621 / DSM 15236 / T118) (Rhodoferax ferrireducens), this protein is 3-methyl-2-oxobutanoate hydroxymethyltransferase.